The primary structure comprises 614 residues: Probable LRR receptor-like serine/threonine-protein kinase At5g63710 (614 aa).

Residues M1 to P50 form the signal peptide. Residues D51–D224 lie on the Extracellular side of the membrane. N65, N125, N146, and N175 each carry an N-linked (GlcNAc...) asparagine glycan. LRR repeat units follow at residues L115–M139, N141–L163, and S164–I187. A helical transmembrane segment spans residues I225–Y245. Residues H246–A613 are Cytoplasmic-facing. T286 carries the phosphothreonine modification. Residues F289 to T573 enclose the Protein kinase domain. Residue I295–V303 coordinates ATP. The residue at position 312 (T312) is a Phosphothreonine. Position 317 (K317) interacts with ATP. S370 carries the phosphoserine modification. Phosphothreonine is present on T389. D416 serves as the catalytic Proton acceptor. 3 positions are modified to phosphothreonine: T449, T450, and T455. At Y463 the chain carries Phosphotyrosine. Phosphothreonine is present on T466. Residue S470 is modified to Phosphoserine. At T545 the chain carries Phosphothreonine.

It belongs to the protein kinase superfamily. Ser/Thr protein kinase family.

The protein localises to the cell membrane. It carries out the reaction L-seryl-[protein] + ATP = O-phospho-L-seryl-[protein] + ADP + H(+). It catalyses the reaction L-threonyl-[protein] + ATP = O-phospho-L-threonyl-[protein] + ADP + H(+). In Arabidopsis thaliana (Mouse-ear cress), this protein is Probable LRR receptor-like serine/threonine-protein kinase At5g63710.